A 60-amino-acid polypeptide reads, in one-letter code: Large ribosomal subunit protein bL32 (60 aa).

The protein belongs to the bacterial ribosomal protein bL32 family.

The polypeptide is Large ribosomal subunit protein bL32 (Petrotoga mobilis (strain DSM 10674 / SJ95)).